Reading from the N-terminus, the 444-residue chain is Tol-Pal system protein TolB (444 aa).

The signal sequence occupies residues 1–31; it reads MSFDLNRRQLMISAATAAGALALGPARDAFG.

This sequence belongs to the TolB family. As to quaternary structure, the Tol-Pal system is composed of five core proteins: the inner membrane proteins TolA, TolQ and TolR, the periplasmic protein TolB and the outer membrane protein Pal. They form a network linking the inner and outer membranes and the peptidoglycan layer.

Its subcellular location is the periplasm. Its function is as follows. Part of the Tol-Pal system, which plays a role in outer membrane invagination during cell division and is important for maintaining outer membrane integrity. The protein is Tol-Pal system protein TolB of Rhodopseudomonas palustris (strain ATCC BAA-98 / CGA009).